Here is a 433-residue protein sequence, read N- to C-terminus: L-lysine 2,3-aminomutase (433 aa).

The 213-residue stretch at 122–334 (HRYPDRVLFY…SLIGHTTGFA (213 aa)) folds into the Radical SAM core domain. 3 residues coordinate [4Fe-4S] cluster: Cys-136, Cys-140, and Cys-143. Cys-279 is a Zn(2+) binding site. Residue Lys-348 is modified to N6-(pyridoxal phosphate)lysine. 3 residues coordinate Zn(2+): Cys-389, Cys-392, and Cys-396.

This sequence belongs to the radical SAM superfamily. KamA family. [4Fe-4S] cluster serves as cofactor. The cofactor is pyridoxal 5'-phosphate. Zn(2+) is required as a cofactor.

The enzyme catalyses L-lysine = (3S)-3,6-diaminohexanoate. In terms of biological role, catalyzes the interconversion of L-alpha-lysine and L-beta-lysine. Is involved in the biosynthesis pathway of N6-acetyl-beta-lysine, a compatible solute produced by methanogenic archaea that helps cells to cope with salt stress. The polypeptide is L-lysine 2,3-aminomutase (ablA) (Methanococcus maripaludis (strain DSM 14266 / JCM 13030 / NBRC 101832 / S2 / LL)).